A 264-amino-acid chain; its full sequence is Thiazole synthase (264 aa).

The Schiff-base intermediate with DXP role is filled by lysine 106. 1-deoxy-D-xylulose 5-phosphate contacts are provided by residues glycine 167, 193–194, and 215–216; these read AG and NS.

Belongs to the ThiG family. In terms of assembly, homotetramer. Forms heterodimers with either ThiH or ThiS.

It is found in the cytoplasm. The catalysed reaction is [ThiS sulfur-carrier protein]-C-terminal-Gly-aminoethanethioate + 2-iminoacetate + 1-deoxy-D-xylulose 5-phosphate = [ThiS sulfur-carrier protein]-C-terminal Gly-Gly + 2-[(2R,5Z)-2-carboxy-4-methylthiazol-5(2H)-ylidene]ethyl phosphate + 2 H2O + H(+). Its pathway is cofactor biosynthesis; thiamine diphosphate biosynthesis. Its function is as follows. Catalyzes the rearrangement of 1-deoxy-D-xylulose 5-phosphate (DXP) to produce the thiazole phosphate moiety of thiamine. Sulfur is provided by the thiocarboxylate moiety of the carrier protein ThiS. In vitro, sulfur can be provided by H(2)S. The protein is Thiazole synthase of Prochlorococcus marinus (strain MIT 9312).